The sequence spans 171 residues: UPF0316 protein Exig_2248 (171 aa).

3 helical membrane-spanning segments follow: residues 4–24, 31–51, and 57–77; these read ILLI…RTIM, IIAG…LGIV, and TVGM…GGFV.

This sequence belongs to the UPF0316 family.

It is found in the cell membrane. The chain is UPF0316 protein Exig_2248 from Exiguobacterium sibiricum (strain DSM 17290 / CCUG 55495 / CIP 109462 / JCM 13490 / 255-15).